Consider the following 263-residue polypeptide: Pheophorbidase (263 aa).

The 232-residue stretch at 13–244 folds into the AB hydrolase-1 domain; it reads HFVFVHGASH…LEESDHSAFF (232 aa). The active-site Acyl-ester intermediate is the Ser88. Residues Asp212 and His240 each act as charge relay system in the active site.

This sequence belongs to the AB hydrolase superfamily. Homodimer.

It is found in the cytoplasm. The enzyme catalyses pheophorbide a + H2O + H(+) = pyropheophorbide a + methanol + CO2. With respect to regulation, inhibited by methanol and phenylmethylsulfonicfluoride (PMSF). Involved in chlorophyll degradation. Specific for the pheophorbides of the dihydroporphyrin and tetrahydroporphyrin types. Chlorophyllide a, pheophytin a and the nonfluorescent chlorophyll catabolite (NCC) are not used as substrates. This Raphanus sativus (Radish) protein is Pheophorbidase (PPD).